The following is a 422-amino-acid chain: Glycine amidinotransferase, mitochondrial (422 aa).

Catalysis depends on residues Asp-253 and His-302. Residue Cys-406 is the Amidino-cysteine intermediate of the active site.

This sequence belongs to the amidinotransferase family. In terms of assembly, homodimer. In terms of tissue distribution, strongly expressed in neurons and glia of the brain, the lamina propria, submucosa and serosa of the small intestine, in oocytes and on the fringes of the pancreas. Not expressed in the retina, eye lens, heart or bulbus arteriosus. Expressed in the yolk syncytial layer in gastrula stage embryos, in the yolk syncytial layer and mature somites in early segmentation embryos and in the yolk syncytial layer and the liver of long-pec stage (48 hours post-fertilization) embryos.

It localises to the mitochondrion inner membrane. It carries out the reaction L-arginine + glycine = guanidinoacetate + L-ornithine. The protein operates within amine and polyamine biosynthesis; creatine biosynthesis; creatine from L-arginine and glycine: step 1/2. In terms of biological role, catalyzes the biosynthesis of guanidinoacetate, the immediate precursor of creatine. Creatine plays a vital role in energy metabolism in muscle tissues. May play a role in embryonic and central nervous system development. In Danio rerio (Zebrafish), this protein is Glycine amidinotransferase, mitochondrial.